A 447-amino-acid chain; its full sequence is Trichothecene C-3 esterase (447 aa).

A signal peptide spans M1–A22. N-linked (GlcNAc...) asparagine glycans are attached at residues N59, N66, N136, and N189. Catalysis depends on S202, which acts as the Charge relay system. N-linked (GlcNAc...) asparagine glycans are attached at residues N238, N284, and N314. Residues D352 and H384 each act as charge relay system in the active site. 2 N-linked (GlcNAc...) asparagine glycosylation sites follow: N389 and N423.

The protein belongs to the AB hydrolase superfamily. Lipase family.

The protein operates within sesquiterpene biosynthesis; trichothecene biosynthesis. Its function is as follows. Trichothecene C-3 esterase; part of the core gene cluster that mediates the biosynthesis of trichothecenes, a very large family of chemically related bicyclic sesquiterpene compounds acting as mycotoxins, including T2-toxin. The biosynthesis of trichothecenes begins with the cyclization of farnesyl diphosphate to trichodiene and is catalyzed by the trichodiene synthase TRI5. Trichodiene undergoes a series of oxygenations catalyzed by the cytochrome P450 monooxygenase TRI4. TRI4 controls the addition of four oxygens at C-2, C-3, C-11, and the C-12, C-13-epoxide to form the intermediate isotrichotriol. Isotrichotriol then undergoes a non-enzymatic isomerization and cyclization to form isotrichodermol. During this process, the oxygen at the C-2 position becomes the pyran ring oxygen and the hydroxyl group at C-11 is lost. More complex type A trichothecenes are built by modifying isotrichodermol through a series of paired hydroxylation and acetylation or acylation steps. Isotrichodermol is converted to isotrichodermin by the acetyltransferase TRI101. TRI101 encodes a C-3 transacetylase that acts as a self-protection or resistance factor during biosynthesis and that the presence of a free C-3 hydroxyl group is a key component of Fusarium trichothecene phytotoxicity. A second hydroxyl group is added to C-15 by the trichothecene C-15 hydroxylase TRI11, producing 15-decalonectrin, which is then acetylated by TRI3, producing calonectrin. A third hydroxyl group is added at C-4 by the cytochrome P450 monooxygenase TRI13, converting calonectrin to 3,15-diacetoxyspirpenol, which is subsequently acetylated by the acetyltransferase TRI7. A fourth hydroxyl group is added to C-8 by the cytochrome P450 monooxygenase TRI1, followed by the addition of an isovaleryl moiety by TRI16. Finally, the acetyl group is removed from the C-3 position by the trichothecene C-3 esterase TRI8 to produce T-2 toxin. The polypeptide is Trichothecene C-3 esterase (Fusarium sporotrichioides).